Here is a 643-residue protein sequence, read N- to C-terminus: Uromodulin (643 aa).

A signal peptide spans 1–26; sequence MKCLFSPNFMWMAAVVTSWVIIPAAT. The region spanning 32 to 66 is the EGF-like 1 domain; that stretch reads KSCSECHSNATCTVDGAATTCACQEGFTGDGLECV. Cystine bridges form between C34–C43, C37–C52, C54–C65, C71–C85, C79–C94, C96–C108, C114–C128, C122–C137, C139–C150, C152–C163, C157–C172, C176–C269, C197–C284, C219–C257, C225–C289, C250–C258, C299–C308, C302–C317, C319–C349, C337–C427, and C368–C391. N40 carries an N-linked (GlcNAc...) asparagine glycan. Residues 67–109 enclose the EGF-like 2; calcium-binding domain; the sequence is DLDECAVLGAHNCSATKSCVNTLGSYTCVCPEGFLLSSELGCE. N-linked (GlcNAc...) asparagine glycosylation is present at N78. Positions 110–151 constitute an EGF-like 3; calcium-binding domain; the sequence is DVDECAEPGLSRCHALATCINGEGNYSCVCPAGYLGDGRHCE. An N-linked (GlcNAc...) asparagine glycan is attached at N134. Residues 152–173 are beta hairpin; sequence CSPGSCGPGLDCVREGDALVCV. A D10C region spans residues 174–293; the sequence is DPCQVHRILD…CHLAYCTDPS (120 aa). N234 is a glycosylation site (N-linked (GlcNAc...) asparagine). N277 is a glycosylation site (N-linked (GlcNAc...) asparagine). The 32-residue stretch at 294–325 folds into the EGF-like 4 domain; it reads SVEGTCEECRVDEDCKSDNGEWHCQCKQDFNV. N-linked (GlcNAc...) asparagine glycosylation occurs at N324. The segment at 336–431 is ZP-N; sequence ECGVDDIKLS…RINFACSYPL (96 aa). Residues 336–587 enclose the ZP domain; it reads ECGVDDIKLS…EKCRPTCPET (252 aa). 2 N-linked (GlcNAc...) asparagine glycosylation sites follow: N398 and N449. Positions 432 to 455 are flexible ZP-N/ZP-C linker; important for secretion and polymerization into filaments; that stretch reads DMKVSLKTSLQPMVSALNISMGGT. An internal hydrophobic patch (IHP) region spans residues 456 to 466; that stretch reads GTFTVRMALFQ. The segment at 456–587 is ZP-C; that stretch reads GTFTVRMALF…EKCRPTCPET (132 aa). Cystine bridges form between C508/C568, C529/C584, and C573/C580. A glycan (N-linked (GlcNAc...) asparagine) is linked at N515. The interval 588–591 is essential for cleavage by HPN; the sequence is RFRS. Positions 600–608 are external hydrophobic patch (EHP); regulates polymerization into filaments; that stretch reads VLNLGPITR. The GPI-anchor amidated serine moiety is linked to residue S621. A propeptide spans 622–643 (removed in mature form); the sequence is SLGLLQVWLPLLLSATLTLMSP.

Homodimer that then polymerizes into long filaments. The filaments can additionally assemble laterally to form a sheet. The filaments consist of a zigzag-shaped backbone with laterally protruding arms which interact with bacterial adhesin fimH. Two fimH molecules can bind to a single UMOD monomer. Post-translationally, N-glycosylated. In terms of processing, proteolytically cleaved at a conserved C-terminal proteolytic cleavage site to generate the secreted form found in urine. This cleavage is catalyzed by HPN.

The protein resides in the apical cell membrane. Its subcellular location is the basolateral cell membrane. It localises to the cell projection. It is found in the cilium membrane. The protein localises to the secreted. Functionally, functions in biogenesis and organization of the apical membrane of epithelial cells of the thick ascending limb of Henle's loop (TALH), where it promotes formation of complex filamentous gel-like structure that may play a role in the water barrier permeability. May serve as a receptor for binding and endocytosis of cytokines (IL-1, IL-2) and TNF. Facilitates neutrophil migration across renal epithelia. In the urine, may contribute to colloid osmotic pressure, retards passage of positively charged electrolytes, and inhibits formation of liquid containing supersaturated salts and subsequent formation of salt crystals. Protects against urinary tract infections by binding to type 1 fimbriated E.coli. Binds to bacterial adhesin fimH which mediates the stable formation of bacterial aggregates, prevents the binding of E.coli to uroplakins UPK1A and UPK1B which act as urothelial receptors for type I fimbriae, and allows for pathogen clearance through micturation. Also promotes aggregation of other bacteria including K.pneumoniae, P.aeruginosa and S.mitis and so may also protect against other uropathogens. This Bos taurus (Bovine) protein is Uromodulin (UMOD).